We begin with the raw amino-acid sequence, 299 residues long: tRNA pseudouridine synthase B (299 aa).

D45 serves as the catalytic Nucleophile.

The protein belongs to the pseudouridine synthase TruB family. Type 1 subfamily.

It catalyses the reaction uridine(55) in tRNA = pseudouridine(55) in tRNA. Its function is as follows. Responsible for synthesis of pseudouridine from uracil-55 in the psi GC loop of transfer RNAs. The chain is tRNA pseudouridine synthase B from Streptomyces griseus subsp. griseus (strain JCM 4626 / CBS 651.72 / NBRC 13350 / KCC S-0626 / ISP 5235).